The sequence spans 761 residues: Zinc finger protein 711 (761 aa).

Glycyl lysine isopeptide (Lys-Gly) (interchain with G-Cter in SUMO2) cross-links involve residues Lys-224, Lys-235, and Lys-296. 5 consecutive C2H2-type zinc fingers follow at residues 383–408, 414–436, 476–499, 505–527, and 533–556; these read YPCH…HPDH, YQCT…LESH, HKCK…LAVH, HVCV…MRTH, and YQCQ…KSKH. Residues 515 to 761 are required for transcriptional activation; the sequence is RHPSELKKHM…IMRHHKEALM (247 aa). The C2H2-type 6; atypical zinc finger occupies 562-584; the sequence is YKCEHCPQAFGDERELQRHLDLF. Zn(2+) contacts are provided by Cys-564, Cys-567, and His-580. 6 C2H2-type zinc fingers span residues 590 to 613, 619 to 641, 647 to 670, 676 to 698, 704 to 727, and 733 to 755; these read HQCP…ISVH, HKCE…SDIH, HQCR…LSVH, LKCK…MKTH, YQCE…ISIH, and HRCE…IMRH.

The protein belongs to the krueppel C2H2-type zinc-finger protein family. In terms of assembly, interacts with PHF8. In terms of tissue distribution, expressed in neural tissues.

It localises to the nucleus. In terms of biological role, transcription regulator required for brain development. Probably acts as a transcription factor that binds to the promoter of target genes and recruits PHF8 histone demethylase, leading to activated expression of genes involved in neuron development, such as KDM5C. May compete with transcription factor ARX for activation of expression of KDM5C. The sequence is that of Zinc finger protein 711 (ZNF711) from Homo sapiens (Human).